A 386-amino-acid chain; its full sequence is O-methyltransferase 11 (386 aa).

S-adenosyl-L-homocysteine contacts are provided by Ser207, Gly231, Asp254, Asp274, and Lys288. Asp254 serves as a coordination point for S-adenosyl-L-methionine. His292 acts as the Proton acceptor in catalysis.

This sequence belongs to the class I-like SAM-binding methyltransferase superfamily. Cation-independent O-methyltransferase family. Homodimer.

The catalysed reaction is dopamine + S-adenosyl-L-methionine = 4-methoxytyramine + S-adenosyl-L-homocysteine + H(+). It carries out the reaction 3,4-dihydroxy-5-methoxyphenethylamine + S-adenosyl-L-methionine = 3-hydroxy-4,5-dimethoxyphenethylamine + S-adenosyl-L-homocysteine + H(+). The enzyme catalyses 3-hydroxy-4,5-dimethoxyphenethylamine + S-adenosyl-L-methionine = mescaline + S-adenosyl-L-homocysteine + H(+). It catalyses the reaction 4-hydroxy-3,5-dimethoxyphenethylamine + S-adenosyl-L-methionine = mescaline + S-adenosyl-L-homocysteine + H(+). The protein operates within aromatic compound metabolism. It participates in alkaloid biosynthesis. In terms of biological role, O-methyltransferase participating in the biosynthesis of natural products derived from phenylethylamine, including mescaline, a natural hallucinogen potentially used in psychotherapeutic treatments. Catalyzes the O-methylation of mescaline para hydroxyl groups, using dopamine, 3,4-dihydroxy-5-methoxyphenethylamine, 3-hydroxy-4,5-dimethoxyphenethylamine and 4-hydroxy-3,5-dimethoxyphenethylamine as substrates. The protein is O-methyltransferase 11 of Lophophora williamsii (Peyote).